A 156-amino-acid polypeptide reads, in one-letter code: Ribosomal RNA large subunit methyltransferase H (156 aa).

Residues Leu-73, Gly-104, and 123–128 each bind S-adenosyl-L-methionine; that span reads LSSLTL.

The protein belongs to the RNA methyltransferase RlmH family. Homodimer.

The protein localises to the cytoplasm. The enzyme catalyses pseudouridine(1915) in 23S rRNA + S-adenosyl-L-methionine = N(3)-methylpseudouridine(1915) in 23S rRNA + S-adenosyl-L-homocysteine + H(+). Specifically methylates the pseudouridine at position 1915 (m3Psi1915) in 23S rRNA. The protein is Ribosomal RNA large subunit methyltransferase H of Neisseria gonorrhoeae (strain NCCP11945).